The chain runs to 504 residues: Arabinose import ATP-binding protein AraG (504 aa).

ABC transporter domains are found at residues 8-243 (LSFR…MVGR) and 256-499 (YGEE…MPKV). 40–47 (GENGAGKS) provides a ligand contact to ATP.

This sequence belongs to the ABC transporter superfamily. Arabinose importer (TC 3.A.1.2.2) family. In terms of assembly, the complex is composed of two ATP-binding proteins (AraG), two transmembrane proteins (AraH) and a solute-binding protein (AraF).

The protein resides in the cell inner membrane. It carries out the reaction L-arabinose(out) + ATP + H2O = L-arabinose(in) + ADP + phosphate + H(+). Its function is as follows. Part of the ABC transporter complex AraFGH involved in arabinose import. Responsible for energy coupling to the transport system. This is Arabinose import ATP-binding protein AraG from Shigella dysenteriae serotype 1 (strain Sd197).